We begin with the raw amino-acid sequence, 332 residues long: 2,3-diketo-L-gulonate reductase (332 aa).

The Proton donor role is filled by His-44. NAD(+)-binding positions include 168 to 174 (ITMVDMS), 224 to 225 (WK), and 304 to 306 (GHE).

This sequence belongs to the LDH2/MDH2 oxidoreductase family. DlgD subfamily. In terms of assembly, homodimer.

The protein localises to the cytoplasm. It carries out the reaction 3-dehydro-L-gulonate + NAD(+) = 2,3-dioxo-L-gulonate + NADH + H(+). It catalyses the reaction 3-dehydro-L-gulonate + NADP(+) = 2,3-dioxo-L-gulonate + NADPH + H(+). In terms of biological role, catalyzes the reduction of 2,3-diketo-L-gulonate in the presence of NADH, to form 3-keto-L-gulonate. The chain is 2,3-diketo-L-gulonate reductase from Escherichia fergusonii (strain ATCC 35469 / DSM 13698 / CCUG 18766 / IAM 14443 / JCM 21226 / LMG 7866 / NBRC 102419 / NCTC 12128 / CDC 0568-73).